The following is a 703-amino-acid chain: MEQSANARQSTLRSRTQELNTLSVLSKDVSLEDAKKYWKDRQADGKVDWIFEKVLNKLKILWQKIKDGSATNLEYVRAVILVNEAGNLEEDLEEDLKEDTDTIHIDIHKENEVQENTDCSPERKEDTCLNLNTDCGTDVSGSEPECNSTVSPPAAERVYFGNHSCGPSCLSGINSFLFTKGNPLQLPISCDFQRCHLKINSPDDLSHILYKAPCGRSLRDYDEVHSYLTETGCHFLAVDNFSFNNHVRLDSNSSFNQGIVQDCDISNDVESVPVAFSNEIDNTRPSNFIYRKTSWPPGYSLNNFTDIFVKCCNCTDGCLDILTCSCLQLTAQAFTKCMESSLGIGPLGYKHKRLQEPIPTGLYECNVSCKCDRMLCQNRVVQHGLKLRLQVFKTNTKGWGVRCLDDVDKGTFVCIYAGRILIRTADCTVKSTPDDSVACGNEDHEDSTSTCALILSKRKRKTSHSDSEVTVMHTNPYSMRSHGLSVHRLSNTFSPRQARSGEREFSLQPLRRPKTKTSMLQKRRRQLIEEGACTVQNSSEEEGPTPPQSPEQKSSAGTKIQRNENSDETASGYVSEESSSSVISGGHPLEKPISKFKSKLNKTTVYLSTSPEQTCEENLHFLDASKEGNVGRFLNHSCCPNLFVQQVFVDTHQKCFPWVAFFTNSVVKAGTELTWDYSYDIGTAADQEIQCLCGQKTCKNKVV.

Residues 178-248 (FTKGNPLQLP…DNFSFNNHVR (71 aa)) form the MBD domain. Residues 310 to 384 (KCCNCTDGCL…LCQNRVVQHG (75 aa)) enclose the Pre-SET domain. Zn(2+) contacts are provided by C312, C314, C318, C324, C326, C365, C369, C371, and C376. The SET domain maps to 387–678 (LRLQVFKTNT…AGTELTWDYS (292 aa)). 397 to 399 (KGW) contacts S-adenosyl-L-methionine. Positions 492 to 588 (TFSPRQARSG…SSSVISGGHP (97 aa)) are disordered. The segment covering 511 to 525 (RRPKTKTSMLQKRRR) has biased composition (basic residues). Positions 550 to 560 (PEQKSSAGTKI) are enriched in polar residues. The segment covering 571-586 (SGYVSEESSSSVISGG) has biased composition (low complexity). S-adenosyl-L-methionine contacts are provided by residues R632 and 635 to 636 (NH). Positions 638, 691, 693, and 698 each coordinate Zn(2+).

The protein belongs to the class V-like SAM-binding methyltransferase superfamily.

It localises to the nucleus. The protein localises to the chromosome. The catalysed reaction is N(6),N(6)-dimethyl-L-lysyl(9)-[histone H3] + S-adenosyl-L-methionine = N(6),N(6),N(6)-trimethyl-L-lysyl(9)-[histone H3] + S-adenosyl-L-homocysteine + H(+). Functionally, histone methyltransferase involved in left-right axis specification in early development and mitosis. Specifically trimethylates 'Lys-9' of histone H3 (H3K9me3). H3K9me3 is a specific tag for epigenetic transcriptional repression that recruits HP1 (CBX1, CBX3 and/or CBX5) proteins to methylated histones. Contributes to H3K9me3 in both the interspersed repetitive elements and centromere-associated repeats. Plays a role in chromosome condensation and segregation during mitosis. This chain is Histone-lysine N-methyltransferase SETDB2 (setdb2), found in Xenopus laevis (African clawed frog).